A 306-amino-acid polypeptide reads, in one-letter code: Homoserine O-acetyltransferase (306 aa).

The active-site Acyl-thioester intermediate is C142. Residues K163 and S192 each coordinate substrate. Residue H235 is the Proton acceptor of the active site. E237 is an active-site residue. Residue R249 coordinates substrate.

The protein belongs to the MetA family.

Its subcellular location is the cytoplasm. It catalyses the reaction L-homoserine + acetyl-CoA = O-acetyl-L-homoserine + CoA. The protein operates within amino-acid biosynthesis; L-methionine biosynthesis via de novo pathway; O-acetyl-L-homoserine from L-homoserine: step 1/1. Transfers an acetyl group from acetyl-CoA to L-homoserine, forming acetyl-L-homoserine. The polypeptide is Homoserine O-acetyltransferase (Clostridium botulinum (strain Alaska E43 / Type E3)).